The following is a 603-amino-acid chain: Multicopper oxidase MCE (603 aa).

The N-terminal stretch at 1–21 (MNTFICSALICLSWLPGFIQA) is a signal peptide. The region spanning 30-144 (ITYAKGAPDG…YGALWIRPKE (115 aa)) is the Plastocyanin-like 1 domain. Asn75 is a glycosylation site (N-linked (GlcNAc...) asparagine). Cu cation contacts are provided by His79, His81, His123, and His125. Asn155, Asn180, Asn235, Asn256, Asn272, Asn275, Asn388, Asn394, Asn413, and Asn455 each carry an N-linked (GlcNAc...) asparagine glycan. In terms of domain architecture, Plastocyanin-like 2 spans 173 to 353 (LIVSDWSNFT…TPGDYTIRLP (181 aa)). Residues 450-581 (LLYNPNSTAA…GGMAGVIMDG (132 aa)) form the Plastocyanin-like 3 domain. His495 is a Cu cation binding site. N-linked (GlcNAc...) asparagine glycosylation is found at Asn512 and Asn595.

Belongs to the multicopper oxidase family.

The catalysed reaction is 4 monapinone A + O2 = 2 dinapinone A + 2 H2O. It catalyses the reaction 4 monapinone E + O2 = 2 dinapinone E + 2 H2O. Its pathway is secondary metabolite biosynthesis. Multicopper oxidase; part of the gene cluster that mediates the biosynthesis of dinapinones DPA1 (or (M)-DPA) and DPA2 (or (P)-DPA), biaryl dihydronaphthopyranones that act in concert as inhibitors of triacylglycerol accumulation in mammalian cells. The first step in the pathway corresponds to the biosynthesis of dihydroxy-decanoyl-CoA by the fungal type I fatty acid synthase (formed by ORF4 and ORF5). The cluster-specific polyketide synthase (ORF7) then accepts and extends dihydroxy-decanoyl-CoA with 6 malonyl-CoA moieties and cyclizes the molecule to produce a putative polyhydroxynaphthopyranone intermediate, which is further methylated by the cluster-specific methyltransferase (ORF1) at 7-OH to produce monapinone A (MPA). MCE catalyzes the regioselective biaryl coupling of monapinone A (MPA) at the 8,8'-positions to afford dimeric atropisomers DPA1 and DPA2 in a ratio of approximately 1:2.5. Monapinone E (MPE) also appears to be a substrate for MCE and provides the atropisomers dinapinones DPE1 (or (M)-DPE) and DPE2 (or (P)-DPE). This is Multicopper oxidase MCE from Talaromyces pinophilus (Penicillium pinophilum).